A 157-amino-acid chain; its full sequence is UPF0178 protein Nwi_2152 (157 aa).

This sequence belongs to the UPF0178 family.

The sequence is that of UPF0178 protein Nwi_2152 from Nitrobacter winogradskyi (strain ATCC 25391 / DSM 10237 / CIP 104748 / NCIMB 11846 / Nb-255).